The chain runs to 179 residues: MASSASGMEEVRSSVLTPLKLVGLVCIFLALCLDIGAVLSPAWVTADNQYYLSLWESCKKSENRWICDSTLQSDWQIATLALLLGGAAIILIAFLVGLISICVGSRRRFYRPVAVMLFAAVVLQVCGLVLYPIKFIETVTLKIYHEFNWGYGLAWGATIFSFGGAILYCLNPKNYEDYY.

Helical transmembrane passes span 21 to 41 (LVGL…VLSP), 81 to 101 (ALLL…LISI), 113 to 133 (VAVM…LYPI), and 150 to 170 (GYGL…LYCL).

Belongs to the TMEM47 family.

It is found in the membrane. The protein resides in the cell junction. It localises to the adherens junction. Functionally, regulates cell junction organization in epithelial cells. May play a role in the transition from adherens junction to tight junction assembly. This is Transmembrane protein 47 (tmem47) from Xenopus laevis (African clawed frog).